We begin with the raw amino-acid sequence, 416 residues long: Zinc finger protein 92 homolog (416 aa).

One can recognise a KRAB domain in the interval 14-85; sequence VSFEDVSVYF…DIPRTWATAG (72 aa). A disordered region spans residues 86-125; it reads LHIGDRTQSKTSTSTQKHSGRQLPGADPQGGKEGQAARSS. C2H2-type zinc fingers lie at residues 152-174, 180-202, 208-230, 236-258, 264-286, 292-314, 320-342, and 348-370; these read YLCQQCGKAFSRSSNLIKHRIIH, YACPECGKLFRRSFALLEHQRIH, YACPECSKTFTRSSNLIKHQVIH, FACGDCGKLFRRSFALLEHARVH, YACPECGKAFSRSSNLIEHQRTH, YACGQCAKAFKGVSQLIHHQRSH, FACRECGKAFRGRSGLSQHRRVH, and YECSDCGKAFGRRANLFKHQAVH. The interval 368 to 416 is disordered; sequence AVHGARRPAKAETARRLAGPGSTGPGSAVAATSPPRPSTAARPSRPSRR. Residues 394–416 show a composition bias toward low complexity; it reads SAVAATSPPRPSTAARPSRPSRR.

It belongs to the krueppel C2H2-type zinc-finger protein family.

Its subcellular location is the nucleus. Functionally, KRAB domain-containing zinc-finger protein that represses B1/Alu SINE transposable elements and modulates the transcription of nearby genes in a tissue-specific manner. It regulates glucose homeostasis and lipid metabolism by modulating the expression of the endocrine cell-defining transcription factor, MAFB, in pancreatic islets and, the fat metabolism regulator, ACACB, in adipose tissue and muscle. This is Zinc finger protein 92 homolog (ZFP92) from Homo sapiens (Human).